The following is a 142-amino-acid chain: Large ribosomal subunit protein uL13 (142 aa).

This sequence belongs to the universal ribosomal protein uL13 family. As to quaternary structure, part of the 50S ribosomal subunit.

In terms of biological role, this protein is one of the early assembly proteins of the 50S ribosomal subunit, although it is not seen to bind rRNA by itself. It is important during the early stages of 50S assembly. The chain is Large ribosomal subunit protein uL13 from Koribacter versatilis (strain Ellin345).